A 640-amino-acid polypeptide reads, in one-letter code: Dextranase (640 aa).

Positions 1–32 are cleaved as a signal peptide; sequence MPGTGLGRLAKHVTAAAAVFLISTGAVLPAQA.

It belongs to the glycosyl hydrolase 49 family.

The protein resides in the secreted. The enzyme catalyses Endohydrolysis of (1-&gt;6)-alpha-D-glucosidic linkages in dextran.. This is Dextranase from Arthrobacter globiformis.